The following is a 173-amino-acid chain: MIYPQIMHKPALPWVFRRPTQEDGLSIHELIAQCAPLDQNSAYCNFLQSSHFQTTCLMAEQQELLVGFVSAYRKPEQQNELFIWQVAVHPSARGKGLAYQMLKHLLAREDLADITVLETTITRSNQASWRLFQKLDREQGEQGSVSTFLDETCHFEGEHDTEYLYRIPLQSSN.

Residues 14–170 form the N-acetyltransferase domain; the sequence is WVFRRPTQED…TEYLYRIPLQ (157 aa).

This sequence belongs to the acetyltransferase family. EctA subfamily.

The enzyme catalyses L-2,4-diaminobutanoate + acetyl-CoA = (2S)-4-acetamido-2-aminobutanoate + CoA + H(+). Its pathway is amine and polyamine biosynthesis; ectoine biosynthesis; L-ectoine from L-aspartate 4-semialdehyde: step 2/3. Functionally, catalyzes the acetylation of L-2,4-diaminobutyrate (DABA) to gamma-N-acetyl-alpha,gamma-diaminobutyric acid (ADABA) with acetyl coenzyme A. This is L-2,4-diaminobutyric acid acetyltransferase (ectA) from Vibrio cholerae serotype O1 (strain ATCC 39315 / El Tor Inaba N16961).